Here is a 614-residue protein sequence, read N- to C-terminus: Chaperone protein DnaK (614 aa).

Residue threonine 176 is modified to Phosphothreonine; by autocatalysis. Residues 576-614 form a disordered region; the sequence is YQQQQSQGGEAGAANGDASKKDDNTVDGDFHEVHDDDKK. Residues 577–589 show a composition bias toward low complexity; that stretch reads QQQQSQGGEAGAA. Positions 593–614 are enriched in basic and acidic residues; sequence ASKKDDNTVDGDFHEVHDDDKK.

This sequence belongs to the heat shock protein 70 family.

Functionally, acts as a chaperone. The polypeptide is Chaperone protein DnaK (Fructilactobacillus sanfranciscensis (Lactobacillus sanfranciscensis)).